The chain runs to 199 residues: Secreted chorismate mutase (199 aa).

A signal peptide spans 1 to 33; that stretch reads MLTRPREIYLATAVSIGILLSLIAPLGPPLARA. The Chorismate mutase domain occupies 34–113; sequence DGTSQLAELV…ATEAIEYSRF (80 aa). Residues Arg49, Lys60, Asp69, 72–76, 105–109, and Arg134 each bind substrate; these read RVEQQ and TEAIE. The cysteines at positions 160 and 193 are disulfide-linked.

Homodimer.

It localises to the secreted. It catalyses the reaction chorismate = prephenate. Its pathway is metabolic intermediate biosynthesis; prephenate biosynthesis; prephenate from chorismate: step 1/1. Tyrosine, phenylalanine, and tryptophan moderately enhance chorismate mutase activity at low concentrations, but allosterically inhibit the enzyme at higher concentrations. Catalyzes the Claisen rearrangement of chorismate to prephenate. May play some role in the pathogenicity. The chain is Secreted chorismate mutase from Mycobacterium tuberculosis (strain ATCC 25618 / H37Rv).